Reading from the N-terminus, the 534-residue chain is Protein tweety homolog 2 (534 aa).

The Extracellular segment spans residues 1–44 (MATARVEYIAPWWVYWLHNLPHVDFSLQRESGDFNPKDPGYQQT). Residues 45–65 (LLFVALFIALCAAVNLLFVSG) form a helical membrane-spanning segment. Over 66-87 (YLICLCCCKKEDETETKMTSSC) the chain is Cytoplasmic. The chain crosses the membrane as a helical span at residues 88-108 (CVTWTAAVSGLLCCAAVGIGF). Topologically, residues 109–213 (YGNSETNDGV…NASIIEYYRW (105 aa)) are extracellular. The Ca(2+) site is built by Glu-113 and Asp-116. N-linked (GlcNAc...) asparagine glycosylation occurs at Asn-129. The RGD motif lies at 164-166 (RGD). Asn-197 and Asn-204 each carry an N-linked (GlcNAc...) asparagine glycan. The chain crosses the membrane as a helical span at residues 214–234 (LSYLILFITDVVICLVTCLGL). Over 235 to 240 (AKKSKC) the chain is Cytoplasmic. A helical membrane pass occupies residues 241–261 (LLLTMLCCGLIALMLSWASLA). Residues 262–388 (LETSSAVGTS…IGICYDGVEG (127 aa)) lie on the Extracellular side of the membrane. 2 disulfides stabilise this stretch: Cys-274–Cys-382 and Cys-300–Cys-367. Asn-352 carries an N-linked (GlcNAc...) asparagine glycan. The chain crosses the membrane as a helical span at residues 389–409 (LLYLSLFSLLAAVAFTAMVCA). Topologically, residues 410-534 (MPRAWKHLAA…PNIYSNVFPA (125 aa)) are cytoplasmic.

The protein belongs to the tweety family. As to quaternary structure, forms cis-homodimers in the presence of Ca(+2) and forms monomers and trans-dimers in the absence of Ca(2+).

It is found in the cell membrane. It carries out the reaction chloride(in) = chloride(out). It catalyses the reaction L-glutamate(out) = L-glutamate(in). In terms of biological role, may act as a calcium-independent, swelling-dependent volume-regulated anion channel (VRAC-swell) which plays a pivotal role in the process of regulatory volume decrease (RVD) in the brain through the efflux of anions like chloride and organic osmolytes like glutamate. Probable large-conductance Ca(2+)-activated chloride channel. In Xenopus laevis (African clawed frog), this protein is Protein tweety homolog 2 (ttyh2).